A 510-amino-acid polypeptide reads, in one-letter code: Nucleosome assembly protein 1-like 3 (510 aa).

Disordered regions lie at residues 1–99 (MAEA…LGTN) and 161–311 (PTEE…KRED). A compositionally biased stretch (low complexity) spans 35-74 (SSSSSSSTSGSSSSSSTSGSSSSSGSGSSSSSSGSGSTSS). The segment covering 161–182 (PTEEECEWNSEDEEFSSDEEVQ) has biased composition (acidic residues). 3 stretches are compositionally biased toward basic and acidic residues: residues 200 to 229 (PKEN…EVPK), 235 to 246 (KAEEKADSKDCM), and 254 to 300 (EDPK…VDLK).

Belongs to the nucleosome assembly protein (NAP) family.

It localises to the nucleus. This chain is Nucleosome assembly protein 1-like 3 (NAP1L3), found in Pongo abelii (Sumatran orangutan).